A 206-amino-acid chain; its full sequence is High frequency lysogenization protein HflD homolog (206 aa).

This sequence belongs to the HflD family.

It is found in the cytoplasm. Its subcellular location is the cell inner membrane. In Ectopseudomonas mendocina (strain ymp) (Pseudomonas mendocina), this protein is High frequency lysogenization protein HflD homolog.